We begin with the raw amino-acid sequence, 85 residues long: Translation initiation factor IF-1 (85 aa).

The S1-like domain maps to 1 to 72 (MAKEELLEMR…TKARITYRFM (72 aa)).

It belongs to the IF-1 family. As to quaternary structure, component of the 30S ribosomal translation pre-initiation complex which assembles on the 30S ribosome in the order IF-2 and IF-3, IF-1 and N-formylmethionyl-tRNA(fMet); mRNA recruitment can occur at any time during PIC assembly.

The protein resides in the cytoplasm. Its function is as follows. One of the essential components for the initiation of protein synthesis. Stabilizes the binding of IF-2 and IF-3 on the 30S subunit to which N-formylmethionyl-tRNA(fMet) subsequently binds. Helps modulate mRNA selection, yielding the 30S pre-initiation complex (PIC). Upon addition of the 50S ribosomal subunit IF-1, IF-2 and IF-3 are released leaving the mature 70S translation initiation complex. The sequence is that of Translation initiation factor IF-1 from Erythrobacter litoralis (strain HTCC2594).